The primary structure comprises 292 residues: 4-hydroxy-tetrahydrodipicolinate synthase (292 aa).

T45 serves as a coordination point for pyruvate. Residue Y133 is the Proton donor/acceptor of the active site. The Schiff-base intermediate with substrate role is filled by K161. I203 contributes to the pyruvate binding site.

The protein belongs to the DapA family. As to quaternary structure, homodimer.

It is found in the cytoplasm. The enzyme catalyses L-aspartate 4-semialdehyde + pyruvate = (2S,4S)-4-hydroxy-2,3,4,5-tetrahydrodipicolinate + H2O + H(+). It participates in amino-acid biosynthesis; L-lysine biosynthesis via DAP pathway; (S)-tetrahydrodipicolinate from L-aspartate: step 3/4. Its function is as follows. Catalyzes the condensation of (S)-aspartate-beta-semialdehyde [(S)-ASA] and pyruvate to 4-hydroxy-tetrahydrodipicolinate (HTPA). This is 4-hydroxy-tetrahydrodipicolinate synthase from Pseudomonas aeruginosa (strain ATCC 15692 / DSM 22644 / CIP 104116 / JCM 14847 / LMG 12228 / 1C / PRS 101 / PAO1).